The sequence spans 767 residues: Bifunctional lysine-specific demethylase and histidyl-hydroxylase NO66 (767 aa).

The segment at 21–324 (TVSQKQQREK…GRQEAHRQNS (304 aa)) is disordered. A Phosphoserine modification is found at Ser44. Residues 46–71 (SDDDDEDDGEGEDDNDSNSDEDESGS) are compositionally biased toward acidic residues. The span at 72 to 81 (ESDATSADDS) shows a compositional bias: low complexity. A compositionally biased stretch (acidic residues) spans 82-98 (FSSDDNDDDDSGDEDGS). Composition is skewed to polar residues over residues 127 to 137 (YTINSENSSVE) and 177 to 199 (ESAT…TSKP). Ser214 carries the post-translational modification Phosphoserine. A compositionally biased stretch (polar residues) spans 262–279 (PSSSGASCPLPSKTSKQV). Residues 315-324 (GRQEAHRQNS) show a composition bias toward basic and acidic residues. Residues 420-565 (CSIRILNPST…NLLEKLMPMV (146 aa)) form the JmjC domain. Residues His466, Asp468, and His531 each coordinate Fe cation.

The protein belongs to the ROX family. NO66 subfamily. Fe(2+) is required as a cofactor.

Its subcellular location is the nucleus. It catalyses the reaction N(6),N(6)-dimethyl-L-lysyl(36)-[histone H3] + 2 2-oxoglutarate + 2 O2 = L-lysyl(36)-[histone H3] + 2 formaldehyde + 2 succinate + 2 CO2. In terms of biological role, oxygenase that can act as both a histone lysine demethylase and a ribosomal histidine hydroxylase. Specifically demethylates 'Lys-4' (H3K4me) and 'Lys-36' (H3K36me) of histone H3, thereby playing a central role in histone code. The chain is Bifunctional lysine-specific demethylase and histidyl-hydroxylase NO66 from Drosophila willistoni (Fruit fly).